The following is a 122-amino-acid chain: Small ribosomal subunit protein uS12 (122 aa).

The protein belongs to the universal ribosomal protein uS12 family. In terms of assembly, part of the 30S ribosomal subunit. Contacts proteins S8 and S17. May interact with IF1 in the 30S initiation complex.

In terms of biological role, with S4 and S5 plays an important role in translational accuracy. Functionally, interacts with and stabilizes bases of the 16S rRNA that are involved in tRNA selection in the A site and with the mRNA backbone. Located at the interface of the 30S and 50S subunits, it traverses the body of the 30S subunit contacting proteins on the other side and probably holding the rRNA structure together. The combined cluster of proteins S8, S12 and S17 appears to hold together the shoulder and platform of the 30S subunit. The protein is Small ribosomal subunit protein uS12 of Corynebacterium efficiens (strain DSM 44549 / YS-314 / AJ 12310 / JCM 11189 / NBRC 100395).